A 177-amino-acid polypeptide reads, in one-letter code: Ribosome maturation factor RimM (177 aa).

In terms of domain architecture, PRC barrel spans 98-171; it reads GETIFLSEIK…AVVMDLPEGL (74 aa).

Belongs to the RimM family. Binds ribosomal protein uS19.

It is found in the cytoplasm. Its function is as follows. An accessory protein needed during the final step in the assembly of 30S ribosomal subunit, possibly for assembly of the head region. Essential for efficient processing of 16S rRNA. May be needed both before and after RbfA during the maturation of 16S rRNA. It has affinity for free ribosomal 30S subunits but not for 70S ribosomes. The sequence is that of Ribosome maturation factor RimM from Bdellovibrio bacteriovorus (strain ATCC 15356 / DSM 50701 / NCIMB 9529 / HD100).